The primary structure comprises 72 residues: ATP synthase subunit c (72 aa).

Helical transmembrane passes span 4–24 (ALGA…GMGI) and 46–66 (LLFI…LIAF).

The protein belongs to the ATPase C chain family. In terms of assembly, F-type ATPases have 2 components, F(1) - the catalytic core - and F(0) - the membrane proton channel. F(1) has five subunits: alpha(3), beta(3), gamma(1), delta(1), epsilon(1). F(0) has three main subunits: a(1), b(2) and c(10-14). The alpha and beta chains form an alternating ring which encloses part of the gamma chain. F(1) is attached to F(0) by a central stalk formed by the gamma and epsilon chains, while a peripheral stalk is formed by the delta and b chains.

The protein localises to the cell membrane. Functionally, f(1)F(0) ATP synthase produces ATP from ADP in the presence of a proton or sodium gradient. F-type ATPases consist of two structural domains, F(1) containing the extramembraneous catalytic core and F(0) containing the membrane proton channel, linked together by a central stalk and a peripheral stalk. During catalysis, ATP synthesis in the catalytic domain of F(1) is coupled via a rotary mechanism of the central stalk subunits to proton translocation. Key component of the F(0) channel; it plays a direct role in translocation across the membrane. A homomeric c-ring of between 10-14 subunits forms the central stalk rotor element with the F(1) delta and epsilon subunits. This is ATP synthase subunit c from Syntrophomonas wolfei subsp. wolfei (strain DSM 2245B / Goettingen).